The chain runs to 252 residues: Trans-aconitate 2-methyltransferase (252 aa).

It belongs to the methyltransferase superfamily. Tam family.

It localises to the cytoplasm. It catalyses the reaction trans-aconitate + S-adenosyl-L-methionine = (E)-3-(methoxycarbonyl)pent-2-enedioate + S-adenosyl-L-homocysteine. Catalyzes the S-adenosylmethionine monomethyl esterification of trans-aconitate. This is Trans-aconitate 2-methyltransferase from Escherichia coli (strain UTI89 / UPEC).